Consider the following 317-residue polypeptide: Ribosomal protein L11 methyltransferase (317 aa).

S-adenosyl-L-methionine is bound by residues Thr158, Gly179, Asp201, and Asn244.

This sequence belongs to the methyltransferase superfamily. PrmA family.

Its subcellular location is the cytoplasm. The catalysed reaction is L-lysyl-[protein] + 3 S-adenosyl-L-methionine = N(6),N(6),N(6)-trimethyl-L-lysyl-[protein] + 3 S-adenosyl-L-homocysteine + 3 H(+). Functionally, methylates ribosomal protein L11. The protein is Ribosomal protein L11 methyltransferase of Lactococcus lactis subsp. cremoris (strain SK11).